Here is a 455-residue protein sequence, read N- to C-terminus: Ribulose bisphosphate carboxylase large chain (455 aa).

Position 5 is an N6,N6,N6-trimethyllysine (lysine 5). 2 residues coordinate substrate: asparagine 114 and threonine 164. Lysine 166 functions as the Proton acceptor in the catalytic mechanism. Residue lysine 168 participates in substrate binding. Positions 192, 194, and 195 each coordinate Mg(2+). An N6-carboxylysine modification is found at lysine 192. Histidine 285 functions as the Proton acceptor in the catalytic mechanism. Positions 286, 318, and 370 each coordinate substrate.

Belongs to the RuBisCO large chain family. Type I subfamily. In terms of assembly, heterohexadecamer of 8 large chains and 8 small chains; disulfide-linked. The disulfide link is formed within the large subunit homodimers. It depends on Mg(2+) as a cofactor. The disulfide bond which can form in the large chain dimeric partners within the hexadecamer appears to be associated with oxidative stress and protein turnover.

It is found in the plastid. The protein resides in the chloroplast. It carries out the reaction 2 (2R)-3-phosphoglycerate + 2 H(+) = D-ribulose 1,5-bisphosphate + CO2 + H2O. It catalyses the reaction D-ribulose 1,5-bisphosphate + O2 = 2-phosphoglycolate + (2R)-3-phosphoglycerate + 2 H(+). RuBisCO catalyzes two reactions: the carboxylation of D-ribulose 1,5-bisphosphate, the primary event in carbon dioxide fixation, as well as the oxidative fragmentation of the pentose substrate in the photorespiration process. Both reactions occur simultaneously and in competition at the same active site. In Erythrina crista-galli (Cockspur coral tree), this protein is Ribulose bisphosphate carboxylase large chain.